A 302-amino-acid chain; its full sequence is Pyridoxal 5'-phosphate synthase subunit PdxS (302 aa).

D32 provides a ligand contact to D-ribose 5-phosphate. K89 acts as the Schiff-base intermediate with D-ribose 5-phosphate in catalysis. A D-ribose 5-phosphate-binding site is contributed by G161. Residue R173 participates in D-glyceraldehyde 3-phosphate binding. Residues G222 and G243–S244 each bind D-ribose 5-phosphate. The segment at A276–N302 is disordered.

Belongs to the PdxS/SNZ family. As to quaternary structure, in the presence of PdxT, forms a dodecamer of heterodimers.

It catalyses the reaction aldehydo-D-ribose 5-phosphate + D-glyceraldehyde 3-phosphate + L-glutamine = pyridoxal 5'-phosphate + L-glutamate + phosphate + 3 H2O + H(+). It functions in the pathway cofactor biosynthesis; pyridoxal 5'-phosphate biosynthesis. In terms of biological role, catalyzes the formation of pyridoxal 5'-phosphate from ribose 5-phosphate (RBP), glyceraldehyde 3-phosphate (G3P) and ammonia. The ammonia is provided by the PdxT subunit. Can also use ribulose 5-phosphate and dihydroxyacetone phosphate as substrates, resulting from enzyme-catalyzed isomerization of RBP and G3P, respectively. In Halobacterium salinarum (strain ATCC 29341 / DSM 671 / R1), this protein is Pyridoxal 5'-phosphate synthase subunit PdxS.